Consider the following 151-residue polypeptide: Small ribosomal subunit protein bS6 (151 aa).

The tract at residues 94–151 is disordered; sequence EEHEQGPSAMMRKRDDDDRGERGERPRGPRPERGERGERGERGPRRPREDNIGEEGLY. A compositionally biased stretch (basic and acidic residues) spans 105–144; it reads RKRDDDDRGERGERPRGPRPERGERGERGERGPRRPREDN.

The protein belongs to the bacterial ribosomal protein bS6 family.

Binds together with bS18 to 16S ribosomal RNA. The chain is Small ribosomal subunit protein bS6 from Beijerinckia indica subsp. indica (strain ATCC 9039 / DSM 1715 / NCIMB 8712).